The following is a 281-amino-acid chain: Short neuropeptide F (281 aa).

An N-terminal signal peptide occupies residues 1–30 (MFHLKRELSQGCALALICLVSLQMQQPAQA). Positions 31–64 (EVSSAQGTPLSNLYDNLLQREYAGPVVFPNHQVE) are excised as a propeptide. Phenylalanine amide is present on residues phenylalanine 77 and phenylalanine 111. The propeptide occupies 115 to 165 (DPSLPQMRRTAYDDLLERELTLNSQQQQQQLGTEPDSDLGADYDGLYERVV). The disordered stretch occupies residues 137–156 (NSQQQQQQLGTEPDSDLGAD). Position 173 is a tryptophan amide (tryptophan 173). A propeptide spanning residues 176 to 246 (SVPQFEANNA…NDTSEFQREV (71 aa)) is cleaved from the precursor. The interval 226–281 (ANDEDTDTDLNNDTSEFQREVRKPMRLRWGRSTGKAPSEQKHTPEETSSIPPKTQN) is disordered. Tryptophan amide is present on tryptophan 254. A propeptide spanning residues 257–281 (STGKAPSEQKHTPEETSSIPPKTQN) is cleaved from the precursor. Residues 271-281 (ETSSIPPKTQN) show a composition bias toward polar residues.

Belongs to the NPY family. As to expression, stage 17 embryos show expression in the two brain hemispheres (neural cells located in the dorsal posterior region), the connected ventral ganglion (pairs of neural cells along the ventral midline) and the peripheral nervous system (expressed in the antennal-maxillary sensory cells). In the brain hemispheres of the feeding third instar larva, expression in neural cells is located in the dorsal-anterior region of the protocerebrum. In the larval ventral ganglion, expression is seen in the neural cells located in the subesophagial region, along the ventral midline and in thoracic and abdominal segments. In the adult brain, expression is seen in the medulla and the mushroom body calyx (at protein level).

Its subcellular location is the secreted. In terms of biological role, plays a role in controlling food intake and regulating body size. In Drosophila melanogaster (Fruit fly), this protein is Short neuropeptide F (sNPF).